The sequence spans 406 residues: MTYDNLLNRFLTYTRVNTRSDESSETTPTTQSQVDFALTILKPEMKSIGLQNVHYLENGYLVGTLPANGNFPYKIGFIAHMDTADFNAEGVNPQIIDNYNGEIIQLGQTDFVLDPKEFPNLNNYLGQTLITTDGTTLLGSDDKSGIAEIMTAIDYLVKHPEIEHGEIRVGFGPDEEIGRGADQFDVEDFDVDFAYTVDGGPLGELQYETFSAAAAEIDFMGRNVHPGTAKNQMVNALQLAMDFHGQLPQEDRPEKTEGYQGFYHLLSLEGTVDAAHASYIIRDFDDEAFVSRKDFMQKIADKMNAHLGAERVQLQIYDQYYNMRKIIKKDMTCVKLAKKVMENLAIEPIIEPIRGGTDGSKISFMGLPTPNLFAGGENMHGRFEFVSLETMQRAVDVIIGIVCFKQ.

Histidine 80 contacts Zn(2+). The active site involves aspartate 82. Aspartate 141 lines the Zn(2+) pocket. Residue glutamate 175 is the Proton acceptor of the active site. 3 residues coordinate Zn(2+): glutamate 176, aspartate 198, and histidine 380.

Belongs to the peptidase M20B family. It depends on Zn(2+) as a cofactor.

It localises to the cytoplasm. It carries out the reaction Release of the N-terminal residue from a tripeptide.. Functionally, cleaves the N-terminal amino acid of tripeptides. The protein is Peptidase T of Streptococcus mutans serotype c (strain ATCC 700610 / UA159).